Here is a 342-residue protein sequence, read N- to C-terminus: Type II restriction enzyme CviAII (342 aa).

The enzyme catalyses Endonucleolytic cleavage of DNA to give specific double-stranded fragments with terminal 5'-phosphates.. A P subtype restriction enzyme that recognizes the double-stranded sequence 5'-CATG-3' and cleaves after C-1. This is Type II restriction enzyme CviAII (CVIAIIR) from Chlorella (PBCV-1).